The sequence spans 199 residues: Recombination protein RecR (199 aa).

Residues 57–72 form a C4-type zinc finger; sequence CRQCRVLTEEPVCGLC. The Toprim domain maps to 80-175; the sequence is SLLCVVEGPA…RTTRIAHGVP (96 aa).

The protein belongs to the RecR family.

In terms of biological role, may play a role in DNA repair. It seems to be involved in an RecBC-independent recombinational process of DNA repair. It may act with RecF and RecO. In Alkalilimnicola ehrlichii (strain ATCC BAA-1101 / DSM 17681 / MLHE-1), this protein is Recombination protein RecR.